Consider the following 121-residue polypeptide: MVRIAGVNVPDRKHAVVALMSIYGIGKSRARSICLNTGIDEHVQLCKLSEIHIDKLRDAVDEYIVEGDLRREVTLNIKRLIDLGTYRGLRHRRNLPVRGQRTRTNARTCKGPRKSMNKQFK.

The interval 93-121 is disordered; sequence RNLPVRGQRTRTNARTCKGPRKSMNKQFK. Over residues 110–121 the composition is skewed to basic residues; sequence KGPRKSMNKQFK.

This sequence belongs to the universal ribosomal protein uS13 family. As to quaternary structure, part of the 30S ribosomal subunit. Forms a loose heterodimer with protein S19. Forms two bridges to the 50S subunit in the 70S ribosome.

Located at the top of the head of the 30S subunit, it contacts several helices of the 16S rRNA. In the 70S ribosome it contacts the 23S rRNA (bridge B1a) and protein L5 of the 50S subunit (bridge B1b), connecting the 2 subunits; these bridges are implicated in subunit movement. Contacts the tRNAs in the A and P-sites. The polypeptide is Small ribosomal subunit protein uS13 (Blochmanniella pennsylvanica (strain BPEN)).